Reading from the N-terminus, the 330-residue chain is Phenylalanine--tRNA ligase alpha subunit (330 aa).

Glu-246 serves as a coordination point for Mg(2+).

The protein belongs to the class-II aminoacyl-tRNA synthetase family. Phe-tRNA synthetase alpha subunit type 1 subfamily. Tetramer of two alpha and two beta subunits. It depends on Mg(2+) as a cofactor.

It is found in the cytoplasm. The enzyme catalyses tRNA(Phe) + L-phenylalanine + ATP = L-phenylalanyl-tRNA(Phe) + AMP + diphosphate + H(+). The polypeptide is Phenylalanine--tRNA ligase alpha subunit (Campylobacter jejuni subsp. doylei (strain ATCC BAA-1458 / RM4099 / 269.97)).